A 348-amino-acid polypeptide reads, in one-letter code: sn-glycerol-3-phosphate import ATP-binding protein UgpC (348 aa).

The ABC transporter domain maps to 4 to 235 (IQLSNIKKQY…PETTFVADFI (232 aa)). An ATP-binding site is contributed by 37–44 (GPSGCGKS).

The protein belongs to the ABC transporter superfamily. sn-glycerol-3-phosphate importer (TC 3.A.1.1.3) family. As to quaternary structure, the complex is composed of two ATP-binding proteins (UgpC), two transmembrane proteins (UgpA and UgpE) and a solute-binding protein (UgpB).

Its subcellular location is the cell inner membrane. The enzyme catalyses sn-glycerol 3-phosphate(out) + ATP + H2O = sn-glycerol 3-phosphate(in) + ADP + phosphate + H(+). In terms of biological role, part of the ABC transporter complex UgpBAEC involved in sn-glycerol-3-phosphate (G3P) import. Responsible for energy coupling to the transport system. This Bartonella quintana (strain Toulouse) (Rochalimaea quintana) protein is sn-glycerol-3-phosphate import ATP-binding protein UgpC.